A 104-amino-acid polypeptide reads, in one-letter code: MGMGNMNKMMKQMQKMQAQVARLQEELGERTVEASAGGGVVKVTANGRQELVNIKIDPAAVDPEDVEMLQDLILAAVNEALHQSQEMVTREMAKITGNIRLPGF.

It belongs to the YbaB/EbfC family. As to quaternary structure, homodimer.

The protein resides in the cytoplasm. Its subcellular location is the nucleoid. In terms of biological role, binds to DNA and alters its conformation. May be involved in regulation of gene expression, nucleoid organization and DNA protection. The protein is Nucleoid-associated protein Moth_0028 of Moorella thermoacetica (strain ATCC 39073 / JCM 9320).